We begin with the raw amino-acid sequence, 51 residues long: Light-harvesting protein B800/850/890 beta-2 chain (51 aa).

Over 1–17 (ADEMRNVSDEEAKEFHA) the chain is Cytoplasmic. Residues His16 and His34 each coordinate a bacteriochlorophyll. The chain crosses the membrane as a helical span at residues 18-40 (MFSQAFTVYVGVAVVAHILAWAW). At 41–51 (RPWIPGDEGFG) the chain is on the periplasmic side.

It belongs to the antenna complex beta subunit family. In terms of assembly, the core complex is formed by different alpha and beta chains, binding bacteriochlorophyll molecules, and arranged most probably in tetrameric structures disposed around the reaction center. The non-pigmented gamma chains may constitute additional components.

It is found in the cell inner membrane. Its function is as follows. Antenna complexes are light-harvesting systems, which transfer the excitation energy to the reaction centers. The chain is Light-harvesting protein B800/850/890 beta-2 chain from Halorhodospira halophila (strain DSM 244 / SL1) (Ectothiorhodospira halophila (strain DSM 244 / SL1)).